A 162-amino-acid chain; its full sequence is UPF0460 protein y4vQ (162 aa).

Belongs to the UPF0460 family.

In Sinorhizobium fredii (strain NBRC 101917 / NGR234), this protein is UPF0460 protein y4vQ.